We begin with the raw amino-acid sequence, 191 residues long: Gamma-glutamylaminecyclotransferase B (191 aa).

7–10 (YGTL) is a binding site for substrate. Glutamate 82 acts as the Proton acceptor in catalysis. The span at 155–178 (SADFSQNSEQEIKKNNSLQILTST) shows a compositional bias: polar residues. The disordered stretch occupies residues 155–191 (SADFSQNSEQEIKKNNSLQILTSTGDDHDVNFRGPLQ).

It belongs to the gamma-glutamylcyclotransferase family.

It carries out the reaction epsilon-(gamma-L-glutamyl)-L-lysine = 5-oxo-L-proline + L-lysine. Its function is as follows. May contribute to degradation of proteins cross-linked by transglutaminases by degrading the cross-link between a lysine and a glutamic acid residue. Catalyzes the formation of 5-oxo-L-proline from L-gamma-glutamyl-L-epsilon-lysine. This chain is Gamma-glutamylaminecyclotransferase B (ggact.2), found in Danio rerio (Zebrafish).